The sequence spans 373 residues: DNA primase small subunit PriS (373 aa).

Catalysis depends on residues Asp95, Asp97, and Asp281.

This sequence belongs to the eukaryotic-type primase small subunit family. As to quaternary structure, heterodimer of a small subunit (PriS) and a large subunit (PriL). The cofactor is Mg(2+). Mn(2+) is required as a cofactor.

In terms of biological role, catalytic subunit of DNA primase, an RNA polymerase that catalyzes the synthesis of short RNA molecules used as primers for DNA polymerase during DNA replication. The small subunit contains the primase catalytic core and has DNA synthesis activity on its own. Binding to the large subunit stabilizes and modulates the activity, increasing the rate of DNA synthesis while decreasing the length of the DNA fragments, and conferring RNA synthesis capability. The DNA polymerase activity may enable DNA primase to also catalyze primer extension after primer synthesis. May also play a role in DNA repair. In Nitrosopumilus maritimus (strain SCM1), this protein is DNA primase small subunit PriS.